The following is a 93-amino-acid chain: MPKSKVRKKNDFTVSAVSRTPVKVKVGPSSVWFVALFIGLMLIGLVWLMVFQLAAVGSQAPTALNWMAQLGPWNYAIAFAFMITGLLLTMRWH.

2 helical membrane-spanning segments follow: residues 31-51 and 70-90; these read VWFVALFIGLMLIGLVWLMVF and LGPWNYAIAFAFMITGLLLTM.

This sequence belongs to the CrgA family.

The protein resides in the cell membrane. Its function is as follows. Involved in cell division. This Mycobacterium avium (strain 104) protein is Cell division protein CrgA.